The primary structure comprises 270 residues: L-fucose dehydrogenase (270 aa).

Residues arginine 19, isoleucine 21, aspartate 40, lysine 41, aspartate 62, valine 63, asparagine 89, tyrosine 154, lysine 158, isoleucine 187, threonine 189, and leucine 191 each coordinate NAD(+). Tyrosine 154 functions as the Proton acceptor in the catalytic mechanism.

Belongs to the short-chain dehydrogenases/reductases (SDR) family. Homotetramer. Highly expressed in brain, placenta, liver and kidney.

The protein resides in the cytoplasm. The enzyme catalyses L-fucose + NAD(+) = L-fucono-1,5-lactone + NADH + H(+). It carries out the reaction D-arabinose + NAD(+) = D-arabinono-1,5-lactone + NADH + H(+). It catalyses the reaction L-galactose + NAD(+) = L-galactono-1,5-lactone + NADH + H(+). The protein operates within carbohydrate degradation; L-fucose degradation. In terms of biological role, catalyzes the NAD(+)-dependent oxidation of L-fucose, yielding L-fucono-1,5-lactone, which rapidly converts spontaneously to L-fucone-1,4-lactone. Can also act on D-arabinose and L-galactose, with lower catalytic efficiency. Does not use NADPH. May be the initial enzyme of the L-fucose degradation pathway in mammals. The sequence is that of L-fucose dehydrogenase from Homo sapiens (Human).